The following is a 73-amino-acid chain: MARRCDICGKGPLVGNNVSHANNKSKTRSLPNLRSVRATVDGTVKHVRVCTRCLKAGKVVKVAHGASRASARA.

Belongs to the bacterial ribosomal protein bL28 family.

This is Large ribosomal subunit protein bL28 from Anaeromyxobacter sp. (strain Fw109-5).